Reading from the N-terminus, the 65-residue chain is Hirudin-2' (65 aa).

Residues 1 to 3 (ITY) form an interaction with thrombin active site region. 3 disulfide bridges follow: Cys6–Cys14, Cys16–Cys28, and Cys22–Cys39. Residues 39–65 (CVTGEGTPKPQSHNDGDFEEIPEEYLQ) form a disordered region. O-linked (GalNAc...) threonine glycosylation occurs at Thr45. The segment at 55 to 65 (DFEEIPEEYLQ) is interaction with fibrinogen-binding exosite of thrombin. Acidic residues predominate over residues 55 to 65 (DFEEIPEEYLQ). Tyr63 is modified (sulfotyrosine).

It belongs to the protease inhibitor I14 (hirudin) family.

The protein localises to the secreted. In terms of biological role, hirudin is a potent thrombin-specific protease inhibitor. It forms a stable non-covalent complex with alpha-thrombin, thereby abolishing its ability to cleave fibrinogen. This is Hirudin-2' from Hirudo medicinalis (Medicinal leech).